The following is a 222-amino-acid chain: 7-cyano-7-deazaguanine synthase (222 aa).

7–17 contacts ATP; the sequence is LSGGLDSSTVL. 4 residues coordinate Zn(2+): cysteine 191, cysteine 199, cysteine 202, and cysteine 205.

The protein belongs to the QueC family. Zn(2+) is required as a cofactor.

The enzyme catalyses 7-carboxy-7-deazaguanine + NH4(+) + ATP = 7-cyano-7-deazaguanine + ADP + phosphate + H2O + H(+). It functions in the pathway purine metabolism; 7-cyano-7-deazaguanine biosynthesis. Functionally, catalyzes the ATP-dependent conversion of 7-carboxy-7-deazaguanine (CDG) to 7-cyano-7-deazaguanine (preQ(0)). The protein is 7-cyano-7-deazaguanine synthase of Trichodesmium erythraeum (strain IMS101).